The primary structure comprises 830 residues: Periplasmic nitrate reductase (830 aa).

A signal peptide (tat-type signal) is located at residues 1 to 30; that stretch reads MTTRREFIKRSAAVTAACTAGISLSGEASN. Positions 40 to 96 constitute a 4Fe-4S Mo/W bis-MGD-type domain; that stretch reads LKWSKAPCRFCGTGCSVNVAVKDNQVVATHGDIQSEVNRGLNCVKGYFLSKIMYGKD. [4Fe-4S] cluster-binding residues include Cys47, Cys50, Cys54, and Cys82. Mo-bis(molybdopterin guanine dinucleotide) contacts are provided by residues Lys84, Gln151, Asn176, Cys180, 213–220, 244–248, Met374, Gln378, Asn484, 510–511, Lys533, Asp560, and 720–729; these read WGSNMAEM, STFQH, SE, and TGRVLEHWHS. Position 796 (Trp796) interacts with substrate. Residues Asn804 and Lys821 each contribute to the Mo-bis(molybdopterin guanine dinucleotide) site.

The protein belongs to the prokaryotic molybdopterin-containing oxidoreductase family. NasA/NapA/NarB subfamily. As to quaternary structure, component of the periplasmic nitrate reductase NapAB complex composed of NapA and NapB. [4Fe-4S] cluster is required as a cofactor. It depends on Mo-bis(molybdopterin guanine dinucleotide) as a cofactor. In terms of processing, predicted to be exported by the Tat system. The position of the signal peptide cleavage has not been experimentally proven.

It localises to the periplasm. The catalysed reaction is 2 Fe(II)-[cytochrome] + nitrate + 2 H(+) = 2 Fe(III)-[cytochrome] + nitrite + H2O. In terms of biological role, catalytic subunit of the periplasmic nitrate reductase complex NapAB. Receives electrons from NapB and catalyzes the reduction of nitrate to nitrite. The sequence is that of Periplasmic nitrate reductase from Hahella chejuensis (strain KCTC 2396).